The following is a 130-amino-acid chain: Glycine cleavage system H protein (130 aa).

Residues 24 to 106 (GIKVGISAFA…YQEGWLLKIT (83 aa)) form the Lipoyl-binding domain. Lys-65 bears the N6-lipoyllysine mark.

The protein belongs to the GcvH family. In terms of assembly, the glycine cleavage system is composed of four proteins: P, T, L and H. (R)-lipoate serves as cofactor.

Functionally, the glycine cleavage system catalyzes the degradation of glycine. The H protein shuttles the methylamine group of glycine from the P protein to the T protein. This Synechococcus sp. (strain RCC307) protein is Glycine cleavage system H protein.